The following is a 751-amino-acid chain: Protein WEAK CHLOROPLAST MOVEMENT UNDER BLUE LIGHT-like 3 (751 aa).

At Ser-113 the chain carries Phosphoserine. 2 coiled-coil regions span residues 165–558 (ERRK…ALQE) and 588–647 (QALE…KARD). 2 stretches are compositionally biased toward basic and acidic residues: residues 455-467 (RERQ…KQKE) and 625-689 (NREM…RNKE). Disordered regions lie at residues 455-479 (RERQ…DKDA) and 625-751 (NREM…HSHK). Over residues 704-723 (GSSSNNTGGSTTTNNNNLTP) the composition is skewed to low complexity.

Belongs to the WEB family.

In Arabidopsis thaliana (Mouse-ear cress), this protein is Protein WEAK CHLOROPLAST MOVEMENT UNDER BLUE LIGHT-like 3 (WEL3).